The sequence spans 102 residues: UV-induced protein uvi31 (102 aa).

Belongs to the BolA/IbaG family.

It is found in the mitochondrion matrix. It localises to the cytoplasm. The protein localises to the nucleus. In terms of biological role, acts as a mitochondrial iron-sulfur (Fe-S) cluster assembly factor that facilitates [4Fe-4S] cluster insertion into a subset of mitochondrial proteins such as lipoyl synthase (LS) and succinate dehydrogenase (SDH). Required during the last step of iron-sulfur protein assembly when the iron-sulfur cluster is inserted into the target protein. Probably acts together with the monothiol glutaredoxin grx5. Not required for [2Fe-2S] cluster insertion into mitochondrial proteins. May be involved in control of cell division, especially during the resumption from cell cycle arrest. In Schizosaccharomyces pombe (strain 972 / ATCC 24843) (Fission yeast), this protein is UV-induced protein uvi31.